Consider the following 1101-residue polypeptide: Nuclear pore complex protein NUP107 (1101 aa).

The protein belongs to the nucleoporin Nup84/Nup107 family. Part of the nuclear pore complex (NPC). The NPC has an eight-fold symmetrical structure comprising a central transport channel and two rings, the cytoplasmic and nuclear rings, to which eight filaments are attached. The cytoplasmic filaments have loose ends, while the nuclear filaments are joined in a distal ring, forming a nuclear basket. NPCs are highly dynamic in configuration and composition, and can be devided in 3 subcomplexes, the NUP62 subcomplex, the NUP107-160 subcomplex and the NUP93 subcomplex, containing approximately 30 different nucleoporin proteins.

It localises to the nucleus envelope. It is found in the nucleus. Its subcellular location is the nuclear pore complex. This is Nuclear pore complex protein NUP107 from Arabidopsis thaliana (Mouse-ear cress).